The sequence spans 231 residues: Putative cobalt transport protein CbiM 1 (231 aa).

6 helical membrane-spanning segments follow: residues 8 to 28, 41 to 61, 74 to 94, 97 to 117, 138 to 158, and 175 to 195; these read LPLQ…AYGI, TLPL…LKMP, GLGA…IVLV, ALFL…SMGI, IVNV…ITSI, and FITF…IEGI.

This sequence belongs to the CbiM family. In terms of assembly, forms an energy-coupling factor (ECF) transporter complex composed of an ATP-binding protein (A component, CbiO), a transmembrane protein (T component, CbiQ) and 2 possible substrate-capture proteins (S components, CbiM and CbiN) of unknown stoichimetry.

The protein localises to the cell membrane. It functions in the pathway cofactor biosynthesis; adenosylcobalamin biosynthesis. Its function is as follows. Part of the energy-coupling factor (ECF) transporter complex CbiMNOQ involved in cobalt import. In Methanosphaerula palustris (strain ATCC BAA-1556 / DSM 19958 / E1-9c), this protein is Putative cobalt transport protein CbiM 1.